The chain runs to 2055 residues: Protein PHOTOPERIOD-INDEPENDENT EARLY FLOWERING 1 (2055 aa).

The disordered stretch occupies residues M1–H47. Positions S21 to H47 are enriched in basic and acidic residues. The Nuclear localization signal 1 signature appears at A29 to E36. In terms of domain architecture, HSA spans L35–L107. Coiled coils occupy residues L78–L147 and E229–E250. Disordered regions lie at residues K183 to S332 and E340 to K359. A compositionally biased stretch (acidic residues) spans E208–E230. Basic and acidic residues-rich tracts occupy residues D231–E243 and V267–D276. Residues E392–M416 are a coiled coil. The disordered stretch occupies residues K432–D461. The Helicase ATP-binding domain maps to V548 to H713. D561 to T568 serves as a coordination point for ATP. The DEAH box signature appears at D664 to H667. Positions K1076–N1229 constitute a Helicase C-terminal domain. The segment at E1293–E1313 is disordered. The stretch at F1419–M1492 forms a coiled coil. Short sequence motifs (nuclear localization signal) lie at residues K1506–K1513 and K1570–D1577. The disordered stretch occupies residues D1577–N1597. Residues S1584 to S1594 are compositionally biased toward basic residues. The 55-residue stretch at S1673 to I1727 folds into the Myb-like domain. Disordered stretches follow at residues A1843–T1864 and K1951–S1977. A compositionally biased stretch (polar residues) spans L1844–T1864. Residues G2006–S2029 are a coiled coil.

This sequence belongs to the SNF2/RAD54 helicase family. SWR1 subfamily. Component of the SWR1 chromatin-remodeling complex composed of at least ARP6/ESD1/SUF3, PIE1, SWC6, SWC2 and H2AZs (HTA8, HTA9, HTA11). Interacts (via c-terminus) with SWC6 and ARP6 and (via N-terminus) with H2AZs. As to expression, expressed in ovules, but not in stamens.

The protein resides in the nucleus. The enzyme catalyses ATP + H2O = ADP + phosphate + H(+). Its function is as follows. Component of the SWR1 complex which mediates the ATP-dependent exchange of histone H2A for the H2A variant H2A.F/Z leading to transcriptional regulation of selected genes (e.g. FLC) by chromatin remodeling. Probable DNA-dependent ATPase. Not involved in the repression of FLC in gametophytes, but required for the reactivation of FLC in early embryos and for the maintenance of full activation of FLC in late embryos. In Arabidopsis thaliana (Mouse-ear cress), this protein is Protein PHOTOPERIOD-INDEPENDENT EARLY FLOWERING 1 (PIE1).